The chain runs to 482 residues: MLKLYISMFLDSTEHILKEINRLQHKEQRTNGISCIPLIPLHQAVEARNLEVVEALLERGHNVNETDHRYLTPLHIICSHPNKIGMKEVIAEKTKRDLSSYEERAISEACYNNDINIFKMLLLNDGNRTIDDVQLCTIDYDDSIDTKIIKLLLAYGADTKIKTEDKLKTALHYASTNKNYKLAEYLLIYGAEVNSPDIGNNSPMHEAVRHRNEDVVKILLQYGSNTDHMNSCGTTPLHISVGRVLNRNNYSILKILLEHGTSVNIQSSILGFTALHLSIHSEDKLNLLLEYGADPNILNFEKETPLSMAVKVTRYDINIYNRLIYNICLRAFKYPFIKTTEGYIKNMTCINGYPKCKSIKDACEYEIKNLESIKLSPRFSMADFLKDDNSLMMDKIINNDLIDYYYSFMDSFPIYGNIVKKSIDTAKDRYLLIQGAIRSMDNITFPSQRVSWYNMPLEIKHDIMYLLDDKSLCNLIVAEYDS.

9 ANK repeats span residues 36-65, 69-100, 101-128, 129-161, 166-195, 199-228, 232-265, 270-297, and 301-332; these read IPLIPLHQAVEARNLEVVEALLERGHNVNE, RYLTPLHIICSHPNKIGMKEVIAEKTKRDLSS, YEERAISEACYNNDINIFKMLLLNDGNR, TIDDVQLCTIDYDDSIDTKIIKLLLAYGADTKI, KLKTALHYASTNKNYKLAEYLLIYGAEVNS, GNNSPMHEAVRHRNEDVVKILLQYGSNTDH, CGTTPLHISVGRVLNRNNYSILKILLEHGTSVNI, LGFTALHLSIHSEDKLNLLLEYGADPNI, and EKETPLSMAVKVTRYDINIYNRLIYNICLRAF.

The chain is Putative ankyrin repeat protein FPV232 from Fowlpox virus (strain NVSL) (FPV).